A 360-amino-acid chain; its full sequence is DNA replication and repair protein RecF (360 aa).

33–40 serves as a coordination point for ATP; sequence GENGSGKT.

This sequence belongs to the RecF family.

The protein localises to the cytoplasm. The RecF protein is involved in DNA metabolism; it is required for DNA replication and normal SOS inducibility. RecF binds preferentially to single-stranded, linear DNA. It also seems to bind ATP. The sequence is that of DNA replication and repair protein RecF from Rickettsia typhi (strain ATCC VR-144 / Wilmington).